We begin with the raw amino-acid sequence, 117 residues long: uncharacterized protein (117 aa).

This is an uncharacterized protein from Homo sapiens (Human).